A 477-amino-acid chain; its full sequence is Aspartyl/glutamyl-tRNA(Asn/Gln) amidotransferase subunit B (477 aa).

Belongs to the GatB/GatE family. GatB subfamily. Heterotrimer of A, B and C subunits.

The enzyme catalyses L-glutamyl-tRNA(Gln) + L-glutamine + ATP + H2O = L-glutaminyl-tRNA(Gln) + L-glutamate + ADP + phosphate + H(+). It carries out the reaction L-aspartyl-tRNA(Asn) + L-glutamine + ATP + H2O = L-asparaginyl-tRNA(Asn) + L-glutamate + ADP + phosphate + 2 H(+). Its function is as follows. Allows the formation of correctly charged Asn-tRNA(Asn) or Gln-tRNA(Gln) through the transamidation of misacylated Asp-tRNA(Asn) or Glu-tRNA(Gln) in organisms which lack either or both of asparaginyl-tRNA or glutaminyl-tRNA synthetases. The reaction takes place in the presence of glutamine and ATP through an activated phospho-Asp-tRNA(Asn) or phospho-Glu-tRNA(Gln). This Ureaplasma parvum serovar 3 (strain ATCC 27815 / 27 / NCTC 11736) protein is Aspartyl/glutamyl-tRNA(Asn/Gln) amidotransferase subunit B.